The sequence spans 509 residues: L-aspartate oxidase (509 aa).

FAD-binding positions include 12–15 (SGIA), lysine 34, 41–48 (NSFLAQGG), and aspartate 201. The active-site Proton donor/acceptor is arginine 262. FAD is bound by residues glutamate 341 and 357–358 (SL).

Belongs to the FAD-dependent oxidoreductase 2 family. NadB subfamily. Requires FAD as cofactor.

It is found in the cytoplasm. The enzyme catalyses L-aspartate + O2 = iminosuccinate + H2O2. It participates in cofactor biosynthesis; NAD(+) biosynthesis; iminoaspartate from L-aspartate (oxidase route): step 1/1. Its function is as follows. Catalyzes the oxidation of L-aspartate to iminoaspartate, the first step in the de novo biosynthesis of NAD(+). The chain is L-aspartate oxidase (nadB) from Halalkalibacterium halodurans (strain ATCC BAA-125 / DSM 18197 / FERM 7344 / JCM 9153 / C-125) (Bacillus halodurans).